The chain runs to 534 residues: Probable protein kinase UbiB (534 aa).

A helical membrane pass occupies residues 23 to 43 (DLLFALPLPWFLLAVRYVLPW). One can recognise a Protein kinase domain in the interval 125–492 (RFDVDPLASA…WKKRKDDWFL (368 aa)). Residues 131-139 (LASASVAQV) and lysine 153 each bind ATP. The active-site Proton acceptor is the aspartate 288. The next 2 membrane-spanning stretches (helical) occupy residues 490 to 510 (WFLR…AIGG) and 512 to 532 (LNQL…YLIV).

It belongs to the ABC1 family. UbiB subfamily.

It localises to the cell inner membrane. The protein operates within cofactor biosynthesis; ubiquinone biosynthesis [regulation]. Functionally, is probably a protein kinase regulator of UbiI activity which is involved in aerobic coenzyme Q (ubiquinone) biosynthesis. The protein is Probable protein kinase UbiB of Pseudomonas fluorescens (strain SBW25).